A 346-amino-acid chain; its full sequence is 3-keto-steroid reductase ERG27 (346 aa).

Residues leucine 19, threonine 42, and lysine 48 each contribute to the NADP(+) site. Catalysis depends on proton donor residues serine 182 and tyrosine 205. Positions 205, 209, and 241 each coordinate NADP(+). Lysine 209 (lowers pKa of active site Tyr) is an active-site residue. A helical transmembrane segment spans residues 242-262 (FSFFQYLNVFTYYGMLFLFYL). Residue asparagine 272 is glycosylated (N-linked (GlcNAc...) asparagine).

Belongs to the short-chain dehydrogenases/reductases (SDR) family. ERG27 subfamily. In terms of assembly, heterotetramer of ERG25, ERG26, ERG27 and ERG28. ERG28 acts as a scaffold to tether ERG27 and other 4,4-demethylation-related enzymes, forming a demethylation enzyme complex, in the endoplasmic reticulum. Interacts with ERG25 and ERG28. Also interacts with ERG7, but only in lipid particles.

The protein localises to the endoplasmic reticulum membrane. The protein resides in the lipid droplet. It carries out the reaction 3-dehydro-4alpha-methylzymosterol + NADPH + H(+) = 4alpha-methylzymosterol + NADP(+). Its pathway is steroid biosynthesis; zymosterol biosynthesis; zymosterol from lanosterol: step 5/6. Its function is as follows. 3-keto-steroid reductase; part of the third module of ergosterol biosynthesis pathway that includes the late steps of the pathway. ERG27 is a catalytic component of the C-4 demethylation complex that catalyzes the reduction of the keto group on the C-3. The third module or late pathway involves the ergosterol synthesis itself through consecutive reactions that mainly occur in the endoplasmic reticulum (ER) membrane. Firstly, the squalene synthase ERG9 catalyzes the condensation of 2 farnesyl pyrophosphate moieties to form squalene, which is the precursor of all steroids. Squalene synthase is crucial for balancing the incorporation of farnesyl diphosphate (FPP) into sterol and nonsterol isoprene synthesis. Secondly, the squalene epoxidase ERG1 catalyzes the stereospecific oxidation of squalene to (S)-2,3-epoxysqualene, which is considered to be a rate-limiting enzyme in steroid biosynthesis. Then, the lanosterol synthase ERG7 catalyzes the cyclization of (S)-2,3 oxidosqualene to lanosterol, a reaction that forms the sterol core. In the next steps, lanosterol is transformed to zymosterol through a complex process involving various demethylation, reduction and desaturation reactions. The lanosterol 14-alpha-demethylase ERG11 (also known as CYP51) catalyzes C14-demethylation of lanosterol to produce 4,4'-dimethyl cholesta-8,14,24-triene-3-beta-ol, which is critical for ergosterol biosynthesis. The C-14 reductase ERG24 reduces the C14=C15 double bond of 4,4-dimethyl-cholesta-8,14,24-trienol to produce 4,4-dimethyl-cholesta-8,24-dienol. 4,4-dimethyl-cholesta-8,24-dienol is substrate of the C-4 demethylation complex ERG25-ERG26-ERG27 in which ERG25 catalyzes the three-step monooxygenation required for the demethylation of 4,4-dimethyl and 4alpha-methylsterols, ERG26 catalyzes the oxidative decarboxylation that results in a reduction of the 3-beta-hydroxy group at the C-3 carbon to an oxo group, and ERG27 is responsible for the reduction of the keto group on the C-3. ERG28 has a role as a scaffold to help anchor ERG25, ERG26 and ERG27 to the endoplasmic reticulum and ERG29 regulates the activity of the iron-containing C4-methylsterol oxidase ERG25. Then, the sterol 24-C-methyltransferase ERG6 catalyzes the methyl transfer from S-adenosyl-methionine to the C-24 of zymosterol to form fecosterol. The C-8 sterol isomerase ERG2 catalyzes the reaction which results in unsaturation at C-7 in the B ring of sterols and thus converts fecosterol to episterol. The sterol-C5-desaturase ERG3 then catalyzes the introduction of a C-5 double bond in the B ring to produce 5-dehydroepisterol. The C-22 sterol desaturase ERG5 further converts 5-dehydroepisterol into ergosta-5,7,22,24(28)-tetraen-3beta-ol by forming the C-22(23) double bond in the sterol side chain. Finally, ergosta-5,7,22,24(28)-tetraen-3beta-ol is substrate of the C-24(28) sterol reductase ERG4 to produce ergosterol. Facilitates the association of ERG7 with lipid particles preventing its digestion in the endoplasmic reticulum and the lipid particles. This chain is 3-keto-steroid reductase ERG27, found in Candida albicans (Yeast).